A 138-amino-acid polypeptide reads, in one-letter code: MRHYEIIFLVHPDQSEQVGGMVERYTKLIEEDGGKIHRLEDWGRRQLAYAINNVHKAHYVMLNVECSGKALAELEDNFRYNDAVIRNLIIRRDEAVTEQSEMLKAEENRSERRERRDRPDNTDGSNENDSDSDNNADE.

A compositionally biased stretch (basic and acidic residues) spans 97-121 (TEQSEMLKAEENRSERRERRDRPDN). Residues 97-138 (TEQSEMLKAEENRSERRERRDRPDNTDGSNENDSDSDNNADE) are disordered. Positions 126–138 (NENDSDSDNNADE) are enriched in acidic residues.

The protein belongs to the bacterial ribosomal protein bS6 family.

In terms of biological role, binds together with bS18 to 16S ribosomal RNA. The sequence is that of Small ribosomal subunit protein bS6 from Stutzerimonas stutzeri (strain A1501) (Pseudomonas stutzeri).